Reading from the N-terminus, the 158-residue chain is MFDILMYLFENYVHSEVELLVDEDELTKELTRAGFHQSEILKALTWLERLAELQEGDKPYLCNHDQHSFRIYTKDEMEKLDVECRGFLLFLEQVKVLNVETREMVIDRVMELDEPALILEDLKWVILMVLFNAPGHESAYEQMEDLIFEQPEEGRLHS.

This sequence belongs to the Smg family.

This is Protein Smg homolog from Shewanella oneidensis (strain ATCC 700550 / JCM 31522 / CIP 106686 / LMG 19005 / NCIMB 14063 / MR-1).